We begin with the raw amino-acid sequence, 650 residues long: ATP-dependent DNA helicase PIF1 (650 aa).

The tract at residues 14–192 is PINT; it reads MPSSTEAATD…ALEKRPMESQ (179 aa). 2 positions are modified to phosphoserine: serine 40 and serine 164. The tract at residues 171–199 is disordered; it reads LQRAAATKAPDSALEKRPMESQTSTEAPR. 237-244 provides a ligand contact to ATP; that stretch reads GSAGTGKS. The DNA-binding element occupies 586–605; that stretch reads QAYVALSRARSLQGLRVLDF. Residues 631–650 form a disordered region; that stretch reads LESQDDEEANSDLENMDPNL. Acidic residues predominate over residues 633–650; sequence SQDDEEANSDLENMDPNL.

It belongs to the helicase family. PIF1 subfamily. As to quaternary structure, monomer. Interacts with telomerase. The cofactor is Mg(2+).

The protein localises to the nucleus. The protein resides in the mitochondrion. It catalyses the reaction Couples ATP hydrolysis with the unwinding of duplex DNA at the replication fork by translocating in the 5'-3' direction. This creates two antiparallel DNA single strands (ssDNA). The leading ssDNA polymer is the template for DNA polymerase III holoenzyme which synthesizes a continuous strand.. It carries out the reaction ATP + H2O = ADP + phosphate + H(+). In terms of biological role, DNA-dependent ATPase and 5'-3' DNA helicase required for the maintenance of both mitochondrial and nuclear genome stability. Efficiently unwinds G-quadruplex (G4) DNA structures and forked RNA-DNA hybrids. Resolves G4 structures, preventing replication pausing and double-strand breaks (DSBs) at G4 motifs. Involved in the maintenance of telomeric DNA. Inhibits telomere elongation, de novo telomere formation and telomere addition to DSBs via catalytic inhibition of telomerase. Reduces the processivity of telomerase by displacing active telomerase from DNA ends. Releases telomerase by unwinding the short telomerase RNA/telomeric DNA hybrid that is the intermediate in the telomerase reaction. Possesses an intrinsic strand annealing activity. The chain is ATP-dependent DNA helicase PIF1 from Mus musculus (Mouse).